Reading from the N-terminus, the 566-residue chain is Heat shock protein 70 homolog C57A7.12 (566 aa).

39–46 (AFNRDGKT) is a binding site for ATP. Serine 86 and serine 500 each carry phosphoserine.

This sequence belongs to the heat shock protein 70 family.

In Schizosaccharomyces pombe (strain 972 / ATCC 24843) (Fission yeast), this protein is Heat shock protein 70 homolog C57A7.12.